Reading from the N-terminus, the 509-residue chain is uncharacterized protein (509 aa).

It is found in the virion. This is an uncharacterized protein from Acanthamoeba polyphaga mimivirus (APMV).